The sequence spans 92 residues: Small ribosomal subunit protein uS19 (92 aa).

The tract at residues 73 to 92 is disordered; that stretch reads EFSPSRTYYGHAADKKAKRR.

This sequence belongs to the universal ribosomal protein uS19 family.

In terms of biological role, protein S19 forms a complex with S13 that binds strongly to the 16S ribosomal RNA. This is Small ribosomal subunit protein uS19 from Maricaulis maris (strain MCS10) (Caulobacter maris).